Here is a 272-residue protein sequence, read N- to C-terminus: PILR alpha-associated neural protein (272 aa).

Residues 1–27 form the signal peptide; sequence MWPAQLLSQLLPLWPLLLLPLSLPAQG. The disordered stretch occupies residues 25–93; the sequence is AQGSSHRSPP…PSGFEEGPPS (69 aa). At 28–174 the chain is on the extracellular side; that stretch reads SSHRSPPAPA…FGGRGEGVDP (147 aa). A glycan (O-linked (GalNAc...) threonine) is linked at Thr-136. A helical membrane pass occupies residues 175–195; it reads QLYVTITISIIIVLVATGIIF. At 196-272 the chain is on the cytoplasmic side; the sequence is KFCWDRSQKR…KGAPAFQLNR (77 aa). The tract at residues 205-272 is disordered; that stretch reads RRRPSGQQGA…KGAPAFQLNR (68 aa). Polar residues predominate over residues 209-225; it reads SGQQGALRQEESQQPLT.

Post-translationally, O-glycosylation at Thr-136 is essential for recognition by PILRA.

It is found in the membrane. In terms of biological role, acts as a ligand for PILRA in neuronal tissues, where it may be involved in immune regulation. The chain is PILR alpha-associated neural protein (Pianp) from Rattus norvegicus (Rat).